Reading from the N-terminus, the 400-residue chain is Deoxyguanosinetriphosphate triphosphohydrolase-like protein (400 aa).

One can recognise an HD domain in the interval 73 to 215 (RLTHSIEVSQ…AAIADDIAYN (143 aa)).

It belongs to the dGTPase family. Type 2 subfamily.

The sequence is that of Deoxyguanosinetriphosphate triphosphohydrolase-like protein from Bartonella tribocorum (strain CIP 105476 / IBS 506).